The sequence spans 97 residues: MTKIWVEVAYALPDKQYVIPVELTLGDTVEQAIIASNILTICNDIDLTKNKVGIYSRPAKLSDNVRDGDRVEIYRPLIADPKEMRRKRAEKARQKTE.

The protein belongs to the UPF0125 (RnfH) family.

The polypeptide is Protein RnfH (Proteus mirabilis (strain HI4320)).